The primary structure comprises 301 residues: Mitochondrial substrate carrier family protein Z (301 aa).

Topologically, residues 1–19 are mitochondrial intermembrane; it reads MTGKEENKQQQHVNFPWKR. Solcar repeat units lie at residues 14-101, 116-200, and 210-293; these read NFPW…FTEQ, QQFG…ISDY, and LPVW…VMGI. Residues 20 to 37 form a helical membrane-spanning segment; sequence LVAGAVAGTADVWACHPL. Residues 38 to 65 lie on the Mitochondrial matrix side of the membrane; it reads DRIKTQLQNNPGKSIVGTFGDIVSKGKG. The chain crosses the membrane as a helical span at residues 66–86; that stretch reads FTGGVNALYEGILPMTAEAIF. Residues 87 to 117 are Mitochondrial intermembrane-facing; the sequence is KVGIRYFAFSWFTEQYKTTVYKGETLNKKQQ. The chain crosses the membrane as a helical span at residues 118–138; sequence FGANLLGGAFAGTIESFVVVI. Residues 139–174 are Mitochondrial matrix-facing; that stretch reads PCELLKVRHMTQEHNKSFGTVFRDVLREEGFQGLYK. A helical transmembrane segment spans residues 175 to 191; it reads GGSATLLRQITNHMIRF. At 192 to 212 the chain is on the mitochondrial intermembrane side; it reads PTFYAISDYLKGGDHSVHLPV. A helical transmembrane segment spans residues 213–229; sequence WQNLSAGAIAGTASTLF. The Mitochondrial matrix portion of the chain corresponds to 230 to 275; it reads NNPLDTIKTRMQKQGQNQTTMQVVRGIYQETGVKGYWAGVIPRILR. A helical transmembrane segment spans residues 276-296; that stretch reads VAPGQAITWAVVELVMGILEP. The Mitochondrial intermembrane portion of the chain corresponds to 297-301; the sequence is SSKKH.

Belongs to the mitochondrial carrier (TC 2.A.29) family.

It localises to the mitochondrion inner membrane. Its function is as follows. Mitochondrial solute carriers shuttle metabolites, nucleotides, and cofactors through the mitochondrial inner membrane. The chain is Mitochondrial substrate carrier family protein Z (mcfZ) from Dictyostelium discoideum (Social amoeba).